The sequence spans 194 residues: dCTP deaminase, dUMP-forming (194 aa).

DCTP-binding positions include 105–110 (RSSMGR), Asp123, 131–133 (TLE), Gln152, Tyr166, Lys174, and Gln178. Glu133 (proton donor/acceptor) is an active-site residue.

The protein belongs to the dCTP deaminase family. Homotrimer.

It catalyses the reaction dCTP + 2 H2O = dUMP + NH4(+) + diphosphate. It participates in pyrimidine metabolism; dUMP biosynthesis; dUMP from dCTP: step 1/1. Functionally, bifunctional enzyme that catalyzes both the deamination of dCTP to dUTP and the hydrolysis of dUTP to dUMP without releasing the toxic dUTP intermediate. This is dCTP deaminase, dUMP-forming from Methanobrevibacter smithii (strain ATCC 35061 / DSM 861 / OCM 144 / PS).